Here is a 371-residue protein sequence, read N- to C-terminus: Cytochrome b (371 aa).

4 consecutive transmembrane segments (helical) span residues 25 to 45 (FGSM…FLAI), 69 to 90 (WIMQ…YIHI), 105 to 125 (WLSG…GYVL), and 170 to 190 (FFAL…IHII). Heme b is bound by residues histidine 75 and histidine 89. 2 residues coordinate heme b: histidine 174 and histidine 188. A ubiquinone is bound at residue histidine 193. Helical transmembrane passes span 218-238 (YKDL…LSFS), 280-300 (LGGT…PFTH), 312-332 (LSQT…WTAT), and 339-358 (FITI…IMNP).

This sequence belongs to the cytochrome b family. In terms of assembly, the cytochrome bc1 complex contains 3 respiratory subunits (MT-CYB, CYC1 and UQCRFS1), 2 core proteins (UQCRC1 and UQCRC2) and probably 6 low-molecular weight proteins. Requires heme b as cofactor.

It localises to the mitochondrion inner membrane. Its function is as follows. Component of the ubiquinol-cytochrome c reductase complex (complex III or cytochrome b-c1 complex) that is part of the mitochondrial respiratory chain. The b-c1 complex mediates electron transfer from ubiquinol to cytochrome c. Contributes to the generation of a proton gradient across the mitochondrial membrane that is then used for ATP synthesis. The protein is Cytochrome b (MT-CYB) of Micrurus fulvius (Eastern coral snake).